The primary structure comprises 295 residues: Indole-3-glycerol phosphate synthase (295 aa).

This sequence belongs to the TrpC family.

It catalyses the reaction 1-(2-carboxyphenylamino)-1-deoxy-D-ribulose 5-phosphate + H(+) = (1S,2R)-1-C-(indol-3-yl)glycerol 3-phosphate + CO2 + H2O. Its pathway is amino-acid biosynthesis; L-tryptophan biosynthesis; L-tryptophan from chorismate: step 4/5. The polypeptide is Indole-3-glycerol phosphate synthase (Prochlorococcus marinus (strain MIT 9211)).